The primary structure comprises 301 residues: Probable alpha-L-glutamate ligase 2 (301 aa).

In terms of domain architecture, ATP-grasp spans 104-287; it reads LQLLSRKGIG…VTEPIVEYIE (184 aa). Residues Lys141, 178 to 179, Asp187, and 211 to 213 contribute to the ATP site; these read EY and RSN. Asp248, Glu260, and Asn262 together coordinate Mg(2+). Mn(2+) contacts are provided by Asp248, Glu260, and Asn262.

Belongs to the RimK family. Mg(2+) is required as a cofactor. Requires Mn(2+) as cofactor.

The chain is Probable alpha-L-glutamate ligase 2 from Shewanella baltica (strain OS195).